A 613-amino-acid chain; its full sequence is MRLSQMLFVTLREDPAEAEIPSHKLLLRAGYIRRIGSGVYAYLPLMWRVLGKVSQIVRQEMNAAGAQECLLPQIQPAELWQESGRWDTYTKAEGIMFALTDRQDRQLGLGPTHEEVITTIARDLIRTYRQLPQNLYQIQTKFRDEIRPRFGLMRGREFIMKDAYSFDADVESLRVAYGKMHQAYCNILQRCGLKYRAVDADSGAIGGSGSQEFMVLADAGEDEVLYTEDGRYAANVEKAISLPVDAEPSGLTKFEKRETPGTDTIDKLCQFLKCSPTQVVKNVLYQAVYDNGQTVLVLVSIRGDQEVNEVKLQNELVKLAGKFGGKTVLALTVPDAEMQSKWASQSLPLGYIAPDLADSYIAATKDIHPQFVRLVDQTAVDLKNFVTGANESGYHVVGANWAEAKGKKTKAKSGEFALPDGVVDVRKARPGDRALHNPEQTLKTARGIEIGHIFQLGTKYSQAMGATYTNEQGEEVPLVMGCYGIGVSRLAQAAVEQSYDKDGIIWPVAIAPYQAIVVIPNLNETTQVEAATQLYQDLNAAGIETLLDDRNERAGVKFKDADLIGIPYRIVTGRSLAQGKVEVVQRASRSSTEIALDQVIPTLKEWIAAACPS.

The protein belongs to the class-II aminoacyl-tRNA synthetase family. ProS type 1 subfamily. In terms of assembly, homodimer.

The protein localises to the cytoplasm. It catalyses the reaction tRNA(Pro) + L-proline + ATP = L-prolyl-tRNA(Pro) + AMP + diphosphate. In terms of biological role, catalyzes the attachment of proline to tRNA(Pro) in a two-step reaction: proline is first activated by ATP to form Pro-AMP and then transferred to the acceptor end of tRNA(Pro). As ProRS can inadvertently accommodate and process non-cognate amino acids such as alanine and cysteine, to avoid such errors it has two additional distinct editing activities against alanine. One activity is designated as 'pretransfer' editing and involves the tRNA(Pro)-independent hydrolysis of activated Ala-AMP. The other activity is designated 'posttransfer' editing and involves deacylation of mischarged Ala-tRNA(Pro). The misacylated Cys-tRNA(Pro) is not edited by ProRS. The chain is Proline--tRNA ligase from Cyanothece sp. (strain PCC 7425 / ATCC 29141).